Consider the following 86-residue polypeptide: Apolipoprotein C-I (86 aa).

The N-terminal stretch at 1-26 is a signal peptide; that stretch reads MRLFLSLPVLVVALLTILEGPGPAQG.

The protein belongs to the apolipoprotein C1 family.

Its subcellular location is the secreted. Functionally, inhibitor of lipoprotein binding to the low density lipoprotein (LDL) receptor, LDL receptor-related protein, and very low density lipoprotein (VLDL) receptor. Associates with high density lipoproteins (HDL) and the triacylglycerol-rich lipoproteins in the plasma and makes up about 10% of the protein of the VLDL and 2% of that of HDL. Appears to interfere directly with fatty acid uptake and is also the major plasma inhibitor of cholesteryl ester transfer protein (CETP). Binds free fatty acids and reduces their intracellular esterification. Modulates the interaction of APOE with beta-migrating VLDL and inhibits binding of beta-VLDL to the LDL receptor-related protein. The protein is Apolipoprotein C-I (APOC1) of Plecturocebus moloch (Dusky titi monkey).